The sequence spans 167 residues: DNA-directed RNA polymerase 19 kDa subunit (167 aa).

The interval 15–41 (DNDYKSYDEDDDSISDIGETSDDCCTT) is disordered. Residues 22–36 (DEDDDSISDIGETSD) are compositionally biased toward acidic residues.

It belongs to the poxviridae DNA-directed RNA polymerase 19 kDa subunit family. In terms of assembly, the DNA-dependent RNA polymerase used for intermediate and late genes expression consists of eight subunits (147) kDa, 133 kDa, 35 kDa, 30 kDa, 22 kDa, 19 kDa, 18 kDa and 7 kDa totalling more than 500 kDa in mass. The same holoenzyme, with the addition of the transcription-specificity factor RAP94, is used for early gene expression.

It localises to the virion. The catalysed reaction is RNA(n) + a ribonucleoside 5'-triphosphate = RNA(n+1) + diphosphate. Functionally, part of the DNA-dependent RNA polymerase which catalyzes the transcription of viral DNA into RNA using the four ribonucleoside triphosphates as substrates. Responsible for the transcription of early, intermediate and late genes. DNA-dependent RNA polymerase associates with the early transcription factor (ETF) thereby allowing the early genes transcription. Late transcription, and probably also intermediate transcription, require newly synthesized RNA polymerase. The polypeptide is DNA-directed RNA polymerase 19 kDa subunit (RPO19) (Vertebrata (FPV)).